Reading from the N-terminus, the 294-residue chain is Probable 2-(5''-triphosphoribosyl)-3'-dephosphocoenzyme-A synthase (294 aa).

It belongs to the CitG/MdcB family.

The catalysed reaction is 3'-dephospho-CoA + ATP = 2'-(5''-triphospho-alpha-D-ribosyl)-3'-dephospho-CoA + adenine. In Streptococcus pyogenes serotype M2 (strain MGAS10270), this protein is Probable 2-(5''-triphosphoribosyl)-3'-dephosphocoenzyme-A synthase.